Reading from the N-terminus, the 265-residue chain is 5'-nucleotidase SurE (265 aa).

A divalent metal cation-binding residues include Asp11, Asp12, Ser43, and Asn101.

It belongs to the SurE nucleotidase family. The cofactor is a divalent metal cation.

Its subcellular location is the cytoplasm. The enzyme catalyses a ribonucleoside 5'-phosphate + H2O = a ribonucleoside + phosphate. In terms of biological role, nucleotidase that shows phosphatase activity on nucleoside 5'-monophosphates. This is 5'-nucleotidase SurE from Synechococcus sp. (strain CC9311).